Reading from the N-terminus, the 163-residue chain is Nucleotide-binding protein YajQ (163 aa).

Belongs to the YajQ family.

Functionally, nucleotide-binding protein. This chain is Nucleotide-binding protein YajQ, found in Salmonella typhi.